The sequence spans 1153 residues: Tyrosine-protein kinase JAK1 (1153 aa).

In terms of domain architecture, FERM spans 32 to 416 (KGLEIHFYLA…GYFRLTVDAH (385 aa)). The SH2; atypical domain occupies 435–540 (GCHGPICTEY…NLRFQLRRCC (106 aa)). 2 consecutive Protein kinase domains span residues 580-846 (IVQG…DIVM) and 872-1150 (LKKI…QQML). Residues 878 to 886 (LGEGHFGKV) and K905 each bind ATP. Residue D1000 is the Proton acceptor of the active site. A phosphotyrosine; by autocatalysis mark is found at Y1031 and Y1032.

Belongs to the protein kinase superfamily. Tyr protein kinase family. JAK subfamily. Mg(2+) serves as cofactor.

The protein resides in the endomembrane system. It carries out the reaction L-tyrosyl-[protein] + ATP = O-phospho-L-tyrosyl-[protein] + ADP + H(+). Tyrosine kinase of the non-receptor type, involved in the IFN-alpha/beta/gamma signal pathway. Appears to be required in early development for specific cell migrations (epiboly), expression of homeobox protein goosecoid and formation of anterior structures. The sequence is that of Tyrosine-protein kinase JAK1 (jak1) from Danio rerio (Zebrafish).